Here is a 185-residue protein sequence, read N- to C-terminus: Ribosome-recycling factor (185 aa).

The protein belongs to the RRF family.

The protein resides in the cytoplasm. Responsible for the release of ribosomes from messenger RNA at the termination of protein biosynthesis. May increase the efficiency of translation by recycling ribosomes from one round of translation to another. The protein is Ribosome-recycling factor of Haemophilus influenzae (strain ATCC 51907 / DSM 11121 / KW20 / Rd).